The sequence spans 364 residues: 4-hydroxythreonine-4-phosphate dehydrogenase (364 aa).

His148 and Thr149 together coordinate substrate. Residues His177, His216, and His301 each coordinate a divalent metal cation. Substrate contacts are provided by Lys309, Asn318, and Arg327.

Belongs to the PdxA family. In terms of assembly, homodimer. Zn(2+) serves as cofactor. Mg(2+) is required as a cofactor. It depends on Co(2+) as a cofactor.

It localises to the cytoplasm. The enzyme catalyses 4-(phosphooxy)-L-threonine + NAD(+) = 3-amino-2-oxopropyl phosphate + CO2 + NADH. The protein operates within cofactor biosynthesis; pyridoxine 5'-phosphate biosynthesis; pyridoxine 5'-phosphate from D-erythrose 4-phosphate: step 4/5. Its function is as follows. Catalyzes the NAD(P)-dependent oxidation of 4-(phosphooxy)-L-threonine (HTP) into 2-amino-3-oxo-4-(phosphooxy)butyric acid which spontaneously decarboxylates to form 3-amino-2-oxopropyl phosphate (AHAP). This chain is 4-hydroxythreonine-4-phosphate dehydrogenase, found in Campylobacter jejuni (strain RM1221).